Reading from the N-terminus, the 526-residue chain is MGKIIKSLSRFGKKVGNALTSNTAKKIYNTIGKAAERFAESEIGSAAIDGLVQGSVHSIITGESYGESVKQAVLLNVLGAGDEIPDPLSPGERGIQTKIKEIEEEQRNELVRIKYGKEIREKFGEQLEEIYQFMNGEVKGEEEQEEQYKVLCKAVDSYENLLVTENEQMRTLARALQREATERTENESKMVKEYRQKIDALKVAIEVERDGMQEEAIQEIAGMTADVLEAASEEVPLVGSGMATAIATGRAIEGAYKLKKVINALSGIDLSHLRTPKIEPTMVATTLEHRFKEIPDKELAVSVLAKNDAIVANTKEIKHIKEEILPKFKKIMEEEKELEGIDDKKIHPRVMMRFKVPRSQQPQIHIYSAPWDSDDVFFFHCVSHFHANESFFLGFDLGIDVVHFEDLAAHWHALGAAQEAKGRTLNEAYREFLNLSIGSAFTSPMHARRMIRSKTVHPIYLGSMHYDITYETLKTNATEARYDEDLQMHILRGPLHFQRRAILGALKFGVKVLGDKVDVPLFLKNA.

Residues 1–42 are involved in membrane permeabilization; it reads MGKIIKSLSRFGKKVGNALTSNTAKKIYNTIGKAAERFAESE.

This sequence belongs to the orbivirus VP5 family.

The protein localises to the virion. In terms of biological role, VP5 protein is one of the two proteins (with VP2) which constitute the virus particle outer capsid. Acts as a membrane permeabilization protein that mediates release of viral particles from endosomal compartments into the cytoplasm. Permeabilization activity is probably negatively regulated by VP2 and is triggered by endosomal degradation of VP2 and exposure to low pH. The sequence is that of Outer capsid protein VP5 (Segment-6) from Bluetongue virus 13 (isolate USA) (BTV 13).